Consider the following 441-residue polypeptide: Endoglucanase E-2 (441 aa).

Residues 1 to 31 (MSPRPLRALLGAAAAALVSAAALAFPSQAAA) constitute a signal peptide (tat-type signal). The catalytic stretch occupies residues 32–320 (NDSPFYVNPN…YEMAIAAGGT (289 aa)). D110 is a catalytic residue. Disulfide bonds link C111–C156 and C263–C298. D148 functions as the Proton donor in the catalytic mechanism. D296 functions as the Nucleophile in the catalytic mechanism. Residues 317–343 (AGGTNPNPNPNPTPTPTPTPTPPPGSS) form a disordered region. The linker stretch occupies residues 321–340 (NPNPNPNPTPTPTPTPTPPP). Pro residues predominate over residues 323 to 341 (NPNPNPTPTPTPTPTPPPG). In terms of domain architecture, CBM2 spans 339–441 (PPGSSGACTA…SVPTLTCAAS (103 aa)). C346 and C438 are joined by a disulfide.

It belongs to the glycosyl hydrolase 6 (cellulase B) family. As to quaternary structure, homodimer. Predicted to be exported by the Tat system. The position of the signal peptide cleavage has been experimentally proven.

It catalyses the reaction Endohydrolysis of (1-&gt;4)-beta-D-glucosidic linkages in cellulose, lichenin and cereal beta-D-glucans.. It participates in glycan metabolism; cellulose degradation. This Thermobifida fusca (Thermomonospora fusca) protein is Endoglucanase E-2 (celB).